The sequence spans 228 residues: Ephrin-A5 (228 aa).

Residues 1–20 (MLHVEMLTLLFLVLWMCVFS) form the signal peptide. Positions 29–162 (ADRYAVYWNS…KLKVFVRPTN (134 aa)) constitute an Ephrin RBD domain. An N-linked (GlcNAc...) asparagine glycan is attached at Asn37. 2 disulfides stabilise this stretch: Cys62-Cys102 and Cys90-Cys151. A disordered region spans residues 186–205 (EPADDTVHESAEPSRGENAA). Basic and acidic residues predominate over residues 190-200 (DTVHESAEPSR). A lipid anchor (GPI-anchor amidated asparagine) is attached at Asn203. The propeptide at 204–228 (AAQTPRIPSRLLAILLFLLAMLLTL) is removed in mature form.

This sequence belongs to the ephrin family. Binds to the receptor tyrosine kinases EPHA2, EPHA3, EPHB1 and EPHB2. Interacts with EPHA8; activates EPHA8. Forms a ternary EFNA5-EPHA3-ADAM10 complex mediating EFNA5 extracellular domain shedding by ADAM10 which regulates the EFNA5-EPHA3 complex internalization and function. Expressed in brain, heart, placenta and lung.

The protein resides in the cell membrane. Its subcellular location is the membrane. The protein localises to the caveola. In terms of biological role, cell surface GPI-bound ligand for Eph receptors, a family of receptor tyrosine kinases which are crucial for migration, repulsion and adhesion during neuronal, vascular and epithelial development. Binds promiscuously Eph receptors residing on adjacent cells, leading to contact-dependent bidirectional signaling into neighboring cells. The signaling pathway downstream of the receptor is referred to as forward signaling while the signaling pathway downstream of the ephrin ligand is referred to as reverse signaling. Induces compartmentalized signaling within a caveolae-like membrane microdomain when bound to the extracellular domain of its cognate receptor. This signaling event requires the activity of the Fyn tyrosine kinase. Activates the EPHA3 receptor to regulate cell-cell adhesion and cytoskeletal organization. With the receptor EPHA2 may regulate lens fiber cells shape and interactions and be important for lens transparency maintenance. May function actively to stimulate axon fasciculation. The interaction of EFNA5 with EPHA5 also mediates communication between pancreatic islet cells to regulate glucose-stimulated insulin secretion. Cognate/functional ligand for EPHA7, their interaction regulates brain development modulating cell-cell adhesion and repulsion. The protein is Ephrin-A5 (Efna5) of Rattus norvegicus (Rat).